Here is a 228-residue protein sequence, read N- to C-terminus: Prophenin-2 (228 aa).

Positions 1–29 (METQRASLCLGRWSLWLLLLALVVPSASA) are cleaved as a signal peptide. The propeptide occupies 30 to 146 (QALSYREAVL…FLRRPRLRRQ (117 aa)). 2 disulfide bridges follow: C85-C96 and C107-C124. A run of 7 repeats spans residues 148-157 (FPPPNVPGPR), 158-167 (FPPPNVPGPR), 168-177 (FPPPNFPGPR), 178-187 (FPPPNFPGPR), 188-197 (FPPPNFPGPP), 198-207 (FPPPIFPGPW), and 208-217 (FPPPPPFRPP). Positions 148-217 (FPPPNVPGPR…FPPPPPFRPP (70 aa)) are 7 X 10 AA tandem repeats. Disordered regions lie at residues 167-195 (RFPP…NFPG) and 207-228 (WFPP…PGRR). A Proline amide modification is found at P225. Positions 226 to 228 (GRR) are cleaved as a propeptide — removed in mature form.

It belongs to the cathelicidin family.

It is found in the secreted. Exerts antimicrobial activity. It is more effective against Gram-negative bacteria than Gram-positive bacteria. The sequence is that of Prophenin-2 from Sus scrofa (Pig).